Here is a 75-residue protein sequence, read N- to C-terminus: DNA-directed RNA polymerase subunit omega (75 aa).

The protein belongs to the RNA polymerase subunit omega family. In terms of assembly, the RNAP catalytic core consists of 2 alpha, 1 beta, 1 beta' and 1 omega subunit. When a sigma factor is associated with the core the holoenzyme is formed, which can initiate transcription.

It catalyses the reaction RNA(n) + a ribonucleoside 5'-triphosphate = RNA(n+1) + diphosphate. Promotes RNA polymerase assembly. Latches the N- and C-terminal regions of the beta' subunit thereby facilitating its interaction with the beta and alpha subunits. This is DNA-directed RNA polymerase subunit omega from Lysinibacillus sphaericus (strain C3-41).